The following is a 239-amino-acid chain: 7-cyano-7-deazaguanine synthase (239 aa).

L8 to L18 contacts ATP. Zn(2+)-binding residues include C188, C196, C199, and C202.

It belongs to the QueC family. Requires Zn(2+) as cofactor.

The enzyme catalyses 7-carboxy-7-deazaguanine + NH4(+) + ATP = 7-cyano-7-deazaguanine + ADP + phosphate + H2O + H(+). It functions in the pathway purine metabolism; 7-cyano-7-deazaguanine biosynthesis. Functionally, catalyzes the ATP-dependent conversion of 7-carboxy-7-deazaguanine (CDG) to 7-cyano-7-deazaguanine (preQ(0)). In Picrophilus torridus (strain ATCC 700027 / DSM 9790 / JCM 10055 / NBRC 100828 / KAW 2/3), this protein is 7-cyano-7-deazaguanine synthase.